The following is a 283-amino-acid chain: 1D-myo-inositol 2-acetamido-2-deoxy-alpha-D-glucopyranoside deacetylase (283 aa).

The Zn(2+) site is built by H7, D10, and H148.

Belongs to the MshB deacetylase family. The cofactor is Zn(2+).

It carries out the reaction 1D-myo-inositol 2-acetamido-2-deoxy-alpha-D-glucopyranoside + H2O = 1D-myo-inositol 2-amino-2-deoxy-alpha-D-glucopyranoside + acetate. Catalyzes the deacetylation of 1D-myo-inositol 2-acetamido-2-deoxy-alpha-D-glucopyranoside (GlcNAc-Ins) in the mycothiol biosynthesis pathway. The protein is 1D-myo-inositol 2-acetamido-2-deoxy-alpha-D-glucopyranoside deacetylase of Gordonia bronchialis (strain ATCC 25592 / DSM 43247 / BCRC 13721 / JCM 3198 / KCTC 3076 / NBRC 16047 / NCTC 10667) (Rhodococcus bronchialis).